A 514-amino-acid chain; its full sequence is Maturase K (514 aa).

This sequence belongs to the intron maturase 2 family. MatK subfamily.

The protein localises to the plastid. Its subcellular location is the chloroplast. Usually encoded in the trnK tRNA gene intron. Probably assists in splicing its own and other chloroplast group II introns. This is Maturase K from Plantago argentea (Silver plantain).